The chain runs to 503 residues: Probable protein kinase UbiB (503 aa).

The chain crosses the membrane as a helical span at residues 13 to 35 (TFYRYRLAGLCASLMGSGWICAL). Positions 120-491 (EFETEPIASA…QQRQSLWLAV (372 aa)) constitute a Protein kinase domain. Residues 126–134 (IASASIAQV) and lysine 148 each bind ATP. The active-site Proton acceptor is the aspartate 283. Residues 485–502 (QSLWLAVIAVVLLLILLL) form a helical membrane-spanning segment.

This sequence belongs to the ABC1 family. UbiB subfamily.

The protein localises to the cell inner membrane. The protein operates within cofactor biosynthesis; ubiquinone biosynthesis [regulation]. Its function is as follows. Is probably a protein kinase regulator of UbiI activity which is involved in aerobic coenzyme Q (ubiquinone) biosynthesis. The protein is Probable protein kinase UbiB of Neisseria meningitidis serogroup A / serotype 4A (strain DSM 15465 / Z2491).